A 255-amino-acid polypeptide reads, in one-letter code: tRNA (guanine-N(1)-)-methyltransferase (255 aa).

S-adenosyl-L-methionine contacts are provided by residues G113 and 133-138 (IGDYVL).

The protein belongs to the RNA methyltransferase TrmD family. In terms of assembly, homodimer.

The protein resides in the cytoplasm. The catalysed reaction is guanosine(37) in tRNA + S-adenosyl-L-methionine = N(1)-methylguanosine(37) in tRNA + S-adenosyl-L-homocysteine + H(+). Specifically methylates guanosine-37 in various tRNAs. This Chloroflexus aggregans (strain MD-66 / DSM 9485) protein is tRNA (guanine-N(1)-)-methyltransferase.